Reading from the N-terminus, the 172-residue chain is ATP synthase subunit b (172 aa).

The helical transmembrane segment at 27–47 (LAIVIFGLYKFLPPFIGGILE) threads the bilayer.

The protein belongs to the ATPase B chain family. In terms of assembly, F-type ATPases have 2 components, F(1) - the catalytic core - and F(0) - the membrane proton channel. F(1) has five subunits: alpha(3), beta(3), gamma(1), delta(1), epsilon(1). F(0) has four main subunits: a(1), b(1), b'(1) and c(10-14). The alpha and beta chains form an alternating ring which encloses part of the gamma chain. F(1) is attached to F(0) by a central stalk formed by the gamma and epsilon chains, while a peripheral stalk is formed by the delta, b and b' chains.

Its subcellular location is the cellular thylakoid membrane. Functionally, f(1)F(0) ATP synthase produces ATP from ADP in the presence of a proton or sodium gradient. F-type ATPases consist of two structural domains, F(1) containing the extramembraneous catalytic core and F(0) containing the membrane proton channel, linked together by a central stalk and a peripheral stalk. During catalysis, ATP synthesis in the catalytic domain of F(1) is coupled via a rotary mechanism of the central stalk subunits to proton translocation. In terms of biological role, component of the F(0) channel, it forms part of the peripheral stalk, linking F(1) to F(0). The chain is ATP synthase subunit b from Prochlorococcus marinus (strain MIT 9313).